A 221-amino-acid polypeptide reads, in one-letter code: Arginine ABC transporter permease protein ArtQ (221 aa).

The region spanning 13-206 is the ABC transmembrane type-1 domain; the sequence is ALMTLGLAVC…AVTLISQVGI (194 aa). 5 consecutive transmembrane segments (helical) span residues 17 to 37, 49 to 69, 82 to 102, 121 to 141, and 186 to 206; these read LGLA…FAVL, VFVA…VYFG, IEFG…AAYA, GAAL…PQVW, and TWYG…QVGI.

Belongs to the binding-protein-dependent transport system permease family. HisMQ subfamily. The complex is composed of two ATP-binding proteins (ArtP), two transmembrane proteins (ArtM and ArtQ) and a solute-binding protein (ArtI).

It localises to the cell inner membrane. Part of the ABC transporter complex ArtPIQM involved in arginine transport. Probably responsible for the translocation of the substrate across the membrane. This is Arginine ABC transporter permease protein ArtQ (artQ) from Haemophilus influenzae (strain ATCC 51907 / DSM 11121 / KW20 / Rd).